The primary structure comprises 246 residues: Flagellar brake protein YcgR (246 aa).

In terms of domain architecture, PilZ spans 128–232; that stretch reads KRAHFRAYVG…QAERQLLQAI (105 aa).

The protein belongs to the YcgR family. As to quaternary structure, monomer. Interacts with the flagellar basal bodies.

It localises to the bacterial flagellum basal body. Its function is as follows. Acts as a flagellar brake, regulating swimming and swarming in a bis-(3'-5') cyclic diguanylic acid (c-di-GMP)-dependent manner. Binds 1 c-di-GMP dimer per subunit. Increasing levels of c-di-GMP lead to decreased motility. The chain is Flagellar brake protein YcgR from Thioalkalivibrio sulfidiphilus (strain HL-EbGR7).